A 953-amino-acid polypeptide reads, in one-letter code: Pyruvate, phosphate dikinase, chloroplastic (953 aa).

A chloroplast-targeting transit peptide spans 1–77 (MMSSLSVEGM…VLNPVSPPVT (77 aa)). Residues 55 to 74 (PELRSSGLTPPRAVLNPVSP) form a disordered region. T533 is subject to Phosphothreonine; by PDRP1. The active-site Tele-phosphohistidine intermediate is H535. R641, R698, E827, G848, T849, N850, and D851 together coordinate substrate. E827 serves as a coordination point for Mg(2+). D851 provides a ligand contact to Mg(2+). Catalysis depends on C913, which acts as the Proton donor.

The protein belongs to the PEP-utilizing enzyme family. As to quaternary structure, homotetramer. Requires Mg(2+) as cofactor. Phosphorylation of Thr-533 in the dark inactivates the enzyme. Dephosphorylation upon light stimulation reactivates the enzyme. In terms of tissue distribution, isoform 1 mainly localized in mesophyll cells and only a low level is found in bundle sheath cells. Isoform 2 is expressed in roots and stems.

The protein resides in the plastid. It is found in the chloroplast. It localises to the cytoplasm. It carries out the reaction pyruvate + phosphate + ATP = phosphoenolpyruvate + AMP + diphosphate + H(+). It functions in the pathway photosynthesis; C4 acid pathway. With respect to regulation, activated by light-induced dephosphorylation. Inhibited by dark-induced phosphorylation. Both reactions are catalyzed by PDRP1. Functionally, formation of phosphoenolpyruvate, which is the primary acceptor of CO(2) in C4 and some Crassulacean acid metabolism plants. The polypeptide is Pyruvate, phosphate dikinase, chloroplastic (PPDK) (Flaveria trinervia (Clustered yellowtops)).